Here is a 149-residue protein sequence, read N- to C-terminus: MTKAKKEESEEVPETPSKSYDELLAYLNPIAKPLAGRKLTKKLYKCVKKAIKQKNIRRGVKEVQKFINKGEKGIVVMAGDTLPIEVYCHIPVMCEDRGIPYSYVPSKSDLGAAAGSKRPTCVILIKPHEDYQEAYDECLEDVQALPLPY.

Belongs to the eukaryotic ribosomal protein eL8 family. Component of the small nucleolar ribonucleoprotein particle containing H/ACA-type snoRNAs (H/ACA snoRNPs). Component of the telomerase holoenzyme complex.

It localises to the nucleus. It is found in the nucleolus. Its function is as follows. Required for ribosome biogenesis. Part of a complex which catalyzes pseudouridylation of rRNA. This involves the isomerization of uridine such that the ribose is subsequently attached to C5, instead of the normal N1. Pseudouridine ('psi') residues may serve to stabilize the conformation of rRNAs. The chain is H/ACA ribonucleoprotein complex subunit 2-like protein (nhp2) from Xenopus tropicalis (Western clawed frog).